The sequence spans 317 residues: Lipoyl synthase (317 aa).

The interval 1 to 21 (MVTVIDTLARPRHPEKANRPE) is disordered. Residues 12–21 (RHPEKANRPE) are compositionally biased toward basic and acidic residues. Residues Cys-57, Cys-62, Cys-68, Cys-83, Cys-87, Cys-90, and Ser-296 each coordinate [4Fe-4S] cluster. The region spanning 69–285 (WEKKHATFMI…ETVAYAKGFL (217 aa)) is the Radical SAM core domain.

Belongs to the radical SAM superfamily. Lipoyl synthase family. The cofactor is [4Fe-4S] cluster.

It is found in the cytoplasm. It carries out the reaction [[Fe-S] cluster scaffold protein carrying a second [4Fe-4S](2+) cluster] + N(6)-octanoyl-L-lysyl-[protein] + 2 oxidized [2Fe-2S]-[ferredoxin] + 2 S-adenosyl-L-methionine + 4 H(+) = [[Fe-S] cluster scaffold protein] + N(6)-[(R)-dihydrolipoyl]-L-lysyl-[protein] + 4 Fe(3+) + 2 hydrogen sulfide + 2 5'-deoxyadenosine + 2 L-methionine + 2 reduced [2Fe-2S]-[ferredoxin]. The protein operates within protein modification; protein lipoylation via endogenous pathway; protein N(6)-(lipoyl)lysine from octanoyl-[acyl-carrier-protein]: step 2/2. In terms of biological role, catalyzes the radical-mediated insertion of two sulfur atoms into the C-6 and C-8 positions of the octanoyl moiety bound to the lipoyl domains of lipoate-dependent enzymes, thereby converting the octanoylated domains into lipoylated derivatives. This is Lipoyl synthase from Xanthobacter autotrophicus (strain ATCC BAA-1158 / Py2).